Reading from the N-terminus, the 438-residue chain is Adenylosuccinate synthetase (438 aa).

GTP-binding positions include glycine 13–lysine 19 and glycine 41–threonine 43. Aspartate 14 (proton acceptor) is an active-site residue. Residues aspartate 14 and glycine 41 each contribute to the Mg(2+) site. IMP contacts are provided by residues aspartate 14–lysine 17, asparagine 39–histidine 42, threonine 130, arginine 144, glutamine 225, threonine 240, and arginine 312. The Proton donor role is filled by histidine 42. Alanine 308–arginine 314 contacts substrate. GTP contacts are provided by residues arginine 314, lysine 340–aspartate 342, and serine 422–glycine 424.

This sequence belongs to the adenylosuccinate synthetase family. In terms of assembly, homodimer. The cofactor is Mg(2+).

It is found in the cytoplasm. The catalysed reaction is IMP + L-aspartate + GTP = N(6)-(1,2-dicarboxyethyl)-AMP + GDP + phosphate + 2 H(+). Its pathway is purine metabolism; AMP biosynthesis via de novo pathway; AMP from IMP: step 1/2. Plays an important role in the de novo pathway of purine nucleotide biosynthesis. Catalyzes the first committed step in the biosynthesis of AMP from IMP. This chain is Adenylosuccinate synthetase, found in Ruthia magnifica subsp. Calyptogena magnifica.